Consider the following 199-residue polypeptide: Glycerol-3-phosphate acyltransferase (199 aa).

5 consecutive transmembrane segments (helical) span residues 3–23 (AAVW…GVLV), 50–70 (WGPA…AVLV), 78–98 (DWML…SVFL), 113–133 (LLFL…SVIL), and 154–174 (LALG…LLIF).

The protein belongs to the PlsY family. Probably interacts with PlsX.

The protein resides in the cell inner membrane. The catalysed reaction is an acyl phosphate + sn-glycerol 3-phosphate = a 1-acyl-sn-glycero-3-phosphate + phosphate. It participates in lipid metabolism; phospholipid metabolism. Its function is as follows. Catalyzes the transfer of an acyl group from acyl-phosphate (acyl-PO(4)) to glycerol-3-phosphate (G3P) to form lysophosphatidic acid (LPA). This enzyme utilizes acyl-phosphate as fatty acyl donor, but not acyl-CoA or acyl-ACP. This chain is Glycerol-3-phosphate acyltransferase, found in Thermus thermophilus (strain ATCC 27634 / DSM 579 / HB8).